Consider the following 85-residue polypeptide: Protein Vpu (85 aa).

Topologically, residues 1-7 (MHQENLL) are extracellular. A helical membrane pass occupies residues 8-28 (ALIALSALCLINVLIWLFNLR). The Cytoplasmic segment spans residues 29–85 (IYLVQRKQDRREQEILERLRRIKEIRDDSDYESNEEEQQEVMELIHSHGFANPMFEL).

The protein belongs to the HIV-1 VPU protein family. In terms of assembly, homopentamer. Interacts with host CD4 and BRTC; these interactions induce proteasomal degradation of CD4. Interacts with host BST2; this interaction leads to the degradation of host BST2. Interacts with host FBXW11. Interacts with host AP1M1; this interaction plays a role in the mistrafficking and subsequent degradation of host BST2. Interacts with host RANBP2; this interaction allows Vpu to down-regulate host BLM sumoylation. Post-translationally, phosphorylated by host CK2. This phosphorylation is necessary for interaction with human BTRC and degradation of CD4.

It localises to the host membrane. Ion channel activity is inhibited by hexamethylene amiloride in vitro. Enhances virion budding by targeting host CD4 and Tetherin/BST2 to proteasome degradation. Degradation of CD4 prevents any unwanted premature interactions between viral Env and its host receptor CD4 in the endoplasmic reticulum. Degradation of antiretroviral protein Tetherin/BST2 is important for virion budding, as BST2 tethers new viral particles to the host cell membrane. Mechanistically, Vpu bridges either CD4 or BST2 to BTRC, a substrate recognition subunit of the Skp1/Cullin/F-box protein E3 ubiquitin ligase, induces their ubiquitination and subsequent proteasomal degradation. The alteration of the E3 ligase specificity by Vpu seems to promote the degradation of host IKBKB, leading to NF-kappa-B down-regulation and subsequent apoptosis. Acts as a viroporin that forms an oligomeric ion channel in membranes. Modulates the host DNA repair mechanisms to promote degradation of nuclear viral cDNA in cells that are already productively infected in order to suppress immune sensing and proviral hyper-integration (superinfection). Manipulates PML-NBs and modulates SUMOylation of host BLM protein thereby enhancing its DNA-end processing activity toward viral unintegrated linear DNA. Also inhibits RAD52-mediated homologous repair of viral cDNA, preventing the generation of dead-end circular forms of single copies of the long terminal repeat and permitting sustained nucleolytic attack. This chain is Protein Vpu, found in Human immunodeficiency virus type 1 group O (isolate MVP5180) (HIV-1).